A 384-amino-acid chain; its full sequence is S-adenosylmethionine synthase (384 aa).

His-15 serves as a coordination point for ATP. Position 17 (Asp-17) interacts with Mg(2+). Glu-43 is a K(+) binding site. Positions 56 and 99 each coordinate L-methionine. The interval 99–109 is flexible loop; it reads QSPDINQGVDR. ATP contacts are provided by residues 164 to 166, 230 to 231, Asp-239, 245 to 246, Ala-262, and Lys-266; these read DAK, RF, and RK. Residue Asp-239 participates in L-methionine binding. Residue Lys-270 coordinates L-methionine.

Belongs to the AdoMet synthase family. As to quaternary structure, homotetramer; dimer of dimers. Mg(2+) serves as cofactor. The cofactor is K(+).

It localises to the cytoplasm. It catalyses the reaction L-methionine + ATP + H2O = S-adenosyl-L-methionine + phosphate + diphosphate. Its pathway is amino-acid biosynthesis; S-adenosyl-L-methionine biosynthesis; S-adenosyl-L-methionine from L-methionine: step 1/1. Catalyzes the formation of S-adenosylmethionine (AdoMet) from methionine and ATP. The overall synthetic reaction is composed of two sequential steps, AdoMet formation and the subsequent tripolyphosphate hydrolysis which occurs prior to release of AdoMet from the enzyme. The chain is S-adenosylmethionine synthase from Serratia proteamaculans (strain 568).